The primary structure comprises 186 residues: Large ribosomal subunit protein uL10 (186 aa).

The protein belongs to the universal ribosomal protein uL10 family. Part of the ribosomal stalk of the 50S ribosomal subunit. The N-terminus interacts with L11 and the large rRNA to form the base of the stalk. The C-terminus forms an elongated spine to which L12 dimers bind in a sequential fashion forming a multimeric L10(L12)X complex.

Functionally, forms part of the ribosomal stalk, playing a central role in the interaction of the ribosome with GTP-bound translation factors. The chain is Large ribosomal subunit protein uL10 (rplJ) from Streptomyces virginiae (Streptomyces cinnamonensis).